The following is a 459-amino-acid chain: Palmitoyltransferase PFA4 (459 aa).

The Cytoplasmic portion of the chain corresponds to 1-9; sequence MAARNWSRV. Residues 10–30 traverse the membrane as a helical segment; that stretch reads WVGGTVILISFIAFSSQIFVI. The Lumenal segment spans residues 31–37; sequence WPWYGRE. A helical transmembrane segment spans residues 38 to 58; it reads ISLDLLKLLVPLNLAAFMIFW. Residues 59–138 are Cytoplasmic-facing; sequence NYRLCVITSP…GNCVGFYNQG (80 aa). A DHHC domain is found at 95–145; that stretch reads RYCKNCEHYKPPRAHHCRQCKTCWLKLDHHCPWIGNCVGFYNQGHFIRFLL. The active-site S-palmitoyl cysteine intermediate is C125. The helical transmembrane segment at 139 to 159 threads the bilayer; it reads HFIRFLLWVDIGTTFHLIIMV. The Lumenal segment spans residues 160-177; the sequence is RRVLYIAEYYHQEPTLAD. Residues 178–198 form a helical membrane-spanning segment; sequence VLFLVFNFATCVPVWLCVGMF. Topologically, residues 199-459 are cytoplasmic; the sequence is SIYHVYLACG…DTEEESGYAH (261 aa). The segment at 278–379 is disordered; it reads HTTQYFWPPQ…DYDHYDEGPM (102 aa). Residues 286 to 299 are compositionally biased toward pro residues; the sequence is PQDPSRLPNPPPIP. Polar residues predominate over residues 310–322; sequence NGFNPNLQPTNSL. A compositionally biased stretch (basic and acidic residues) spans 331 to 356; sequence HIDEDEHSHERDQYRHYSSGEERDND.

It belongs to the DHHC palmitoyltransferase family. PFA4 subfamily.

The protein resides in the endoplasmic reticulum membrane. The catalysed reaction is L-cysteinyl-[protein] + hexadecanoyl-CoA = S-hexadecanoyl-L-cysteinyl-[protein] + CoA. Its function is as follows. Mediates the reversible addition of palmitate to target proteins, thereby regulating their membrane association and biological function. The sequence is that of Palmitoyltransferase PFA4 from Cryptococcus neoformans var. neoformans serotype D (strain B-3501A) (Filobasidiella neoformans).